The primary structure comprises 436 residues: Putative UDP-arabinose 4-epimerase 4 (436 aa).

Residues 1-20 (MLNSSGVRTQRRSPRPLSLG) form a disordered region. The Cytoplasmic portion of the chain corresponds to 1–60 (MLNSSGVRTQRRSPRPLSLGGRKIITPTKFAYDHHNPDKVLDFVEMDCLEPKTKNNLTGK). Residues 61–81 (LLLVASLLILAIIVISQSSSF) form a helical; Signal-anchor for type II membrane protein membrane-spanning segment. Over 82-436 (TSPSAFSQRE…KIHPHGYNSY (355 aa)) the chain is Lumenal. NAD(+) is bound at residue 96–127 (HVLVTGGAGYIGSHAALRLLRDSYRVTIVDNL). Catalysis depends on Tyr244, which acts as the Proton acceptor.

It belongs to the NAD(P)-dependent epimerase/dehydratase family. NAD(+) serves as cofactor.

It localises to the golgi apparatus. The protein resides in the golgi stack membrane. It carries out the reaction UDP-beta-L-arabinopyranose = UDP-alpha-D-xylose. It participates in nucleotide-sugar biosynthesis; UDP-L-arabinose biosynthesis; UDP-L-arabinose from UDP-alpha-D-xylose: step 1/1. Its pathway is cell wall biogenesis; cell wall polysaccharide biosynthesis. This chain is Putative UDP-arabinose 4-epimerase 4, found in Arabidopsis thaliana (Mouse-ear cress).